Here is a 435-residue protein sequence, read N- to C-terminus: Glutamyl-tRNA reductase (435 aa).

Residues 49–52 (TCNR), S114, 119–121 (EPQ), and Q125 each bind substrate. C50 acts as the Nucleophile in catalysis. 204–209 (GAGETI) provides a ligand contact to NADP(+).

The protein belongs to the glutamyl-tRNA reductase family. In terms of assembly, homodimer.

It catalyses the reaction (S)-4-amino-5-oxopentanoate + tRNA(Glu) + NADP(+) = L-glutamyl-tRNA(Glu) + NADPH + H(+). It functions in the pathway porphyrin-containing compound metabolism; protoporphyrin-IX biosynthesis; 5-aminolevulinate from L-glutamyl-tRNA(Glu): step 1/2. Functionally, catalyzes the NADPH-dependent reduction of glutamyl-tRNA(Glu) to glutamate 1-semialdehyde (GSA). The sequence is that of Glutamyl-tRNA reductase from Actinobacillus succinogenes (strain ATCC 55618 / DSM 22257 / CCUG 43843 / 130Z).